We begin with the raw amino-acid sequence, 173 residues long: Bursicon (173 aa).

An N-terminal signal peptide occupies residues 1–32 (MLRHLLRHENNKVFVLILLYCVLVSILKLCTA). Disulfide bonds link Cys-52–Cys-101, Cys-66–Cys-115, Cys-76–Cys-136, Cys-80–Cys-138, and Cys-98–Cys-141. The 91-residue stretch at 52–142 (CQVTPVIHVL…PLECMCRPCT (91 aa)) folds into the CTCK domain.

As to quaternary structure, heterodimer of Burs and Pburs. In terms of tissue distribution, expressed in one to two pairs of neurons in each of the thoracic and abdominal neuromeres of the larval CNS. Coexpressed with CCAP in most CCAP-specific neurons. Coexpressed with Pburs in four bilateral neurons in thoracic and abdominal neuromeres of the ventral nervous system.

It is found in the secreted. Its function is as follows. Final heterodimeric neurohormone released at the end of the molting cycle, involved in the sclerotization (tanning) of the insect cuticle, melanization and wing spreading. Heterodimer specifically activates the G protein-coupled receptor rk. In Drosophila melanogaster (Fruit fly), this protein is Bursicon.